We begin with the raw amino-acid sequence, 148 residues long: MKVILKENLENLGHIGDIVKVAPGYARNYLLPRGYATEATEKNAKALEHAKRQLEYKRNKVLEQAKGLAAKIEGLTIAITHQAGEEGKLFGAVTNMELAEHLKAQGVEIDRKKIVLAEPIKHVGEYTASVKVHPEVAAALKVVITKAD.

The protein belongs to the bacterial ribosomal protein bL9 family.

In terms of biological role, binds to the 23S rRNA. The polypeptide is Large ribosomal subunit protein bL9 (Geobacter metallireducens (strain ATCC 53774 / DSM 7210 / GS-15)).